Here is a 360-residue protein sequence, read N- to C-terminus: Phospho-N-acetylmuramoyl-pentapeptide-transferase (360 aa).

10 helical membrane-spanning segments follow: residues 27–47 (ILGV…VIVL), 73–93 (TMGG…WGDL), 97–117 (YVWV…VDDY), 145–165 (AFYL…VPLF), 168–188 (VAIP…VGTS), 199–219 (GLAI…AYLT), 236–256 (SGEL…FLWF), 263–283 (IFMG…IAVI), 288–308 (LVLF…ILQV), and 337–357 (KVIV…FATL).

This sequence belongs to the glycosyltransferase 4 family. MraY subfamily. Mg(2+) serves as cofactor.

Its subcellular location is the cell inner membrane. The catalysed reaction is UDP-N-acetyl-alpha-D-muramoyl-L-alanyl-gamma-D-glutamyl-meso-2,6-diaminopimeloyl-D-alanyl-D-alanine + di-trans,octa-cis-undecaprenyl phosphate = di-trans,octa-cis-undecaprenyl diphospho-N-acetyl-alpha-D-muramoyl-L-alanyl-D-glutamyl-meso-2,6-diaminopimeloyl-D-alanyl-D-alanine + UMP. It participates in cell wall biogenesis; peptidoglycan biosynthesis. Functionally, catalyzes the initial step of the lipid cycle reactions in the biosynthesis of the cell wall peptidoglycan: transfers peptidoglycan precursor phospho-MurNAc-pentapeptide from UDP-MurNAc-pentapeptide onto the lipid carrier undecaprenyl phosphate, yielding undecaprenyl-pyrophosphoryl-MurNAc-pentapeptide, known as lipid I. This is Phospho-N-acetylmuramoyl-pentapeptide-transferase from Marinomonas sp. (strain MWYL1).